Here is a 115-residue protein sequence, read N- to C-terminus: MTGKGQGFGFGLGKMKELADAFKKAQQVQEGAKRLQEELEQMEILGESGGGLVKVIVSGNQEPKRVEISPDALAEGAEVLSDLVTVAMKEAYNKSTATMRERMEELTSGLELPGF.

This sequence belongs to the YbaB/EbfC family. Homodimer.

It is found in the cytoplasm. The protein localises to the nucleoid. Its function is as follows. Binds to DNA and alters its conformation. May be involved in regulation of gene expression, nucleoid organization and DNA protection. This Nostoc punctiforme (strain ATCC 29133 / PCC 73102) protein is Nucleoid-associated protein Npun_F0448.